The primary structure comprises 343 residues: MPNFFKFHTVIERHWQKPYPVLSFLLKPLSGLFAKIAAKWRADFLSGKRQSEKLSVPVVVVGNIHAGGTGKTPIAAALVSGLQEKGVKVGIISRGYGRKSKAVYVLNAASRAEDAGDEPLLLFRKTGAPTAVGSSRVEAGRALLAAHPELELIVADDGLQHYALQRDVEIAVFPAADTGRTDLDLLPNGNLREPLSRLESVDAVVVGGRAADGFMPSEHLFGSRIEAGAVYRLNRPSEKLDISTLSGKRVAAVAGIARPQRFFDTLTHMGIRLDQTVALPDHADIFNRDLPPADVVLVTEKDAVKFSDGICTDNVWVLPVCAIIEPDLAEFVLERLEGVPKAV.

65-72 (HAGGTGKT) serves as a coordination point for ATP.

It belongs to the LpxK family.

It carries out the reaction a lipid A disaccharide + ATP = a lipid IVA + ADP + H(+). It functions in the pathway glycolipid biosynthesis; lipid IV(A) biosynthesis; lipid IV(A) from (3R)-3-hydroxytetradecanoyl-[acyl-carrier-protein] and UDP-N-acetyl-alpha-D-glucosamine: step 6/6. Functionally, transfers the gamma-phosphate of ATP to the 4'-position of a tetraacyldisaccharide 1-phosphate intermediate (termed DS-1-P) to form tetraacyldisaccharide 1,4'-bis-phosphate (lipid IVA). The sequence is that of Tetraacyldisaccharide 4'-kinase from Neisseria gonorrhoeae (strain ATCC 700825 / FA 1090).